Here is a 464-residue protein sequence, read N- to C-terminus: MKLYNTLTRKKEEFIPLEEGKVRMYACGPTVYNYFHIGNARTFMVFDALRRYLIYRGYDVTFVQNFTDVDDKIIRRANEEGVAPEEISERFIKEYFYDAGTLGIEKADIHPKVTENMAEIIAFVAKLVEKGHAYESNGDVYFDVSKYEEYGKLSKQSLEDLQAGARIEINEYKKNPLDFALWKSAKAGEPSWESPWGNGRPGWHIECSAMAKRYLGETIDIHGGGGDLVFPHHENEIAQSEACSGKKFANYWLHVGYLNVDNKKMSKSLNNFFTPREISEEFDLENLRFFMLSAHYRNPINFSRDLLEAAKNGLDRLYTGKNNLEYLLENAAEREVSEEEKNFIHGLQSFKNQFIDAVDDDFNTADGIAVIFDLVREINSHISEKNSKKAVEASYDLLMELTGVLGLLKREAEDLEEEIERLIAERQQARKDKNFALSDKIRDDLKEKGIVLEDTAQGVKWRKL.

C27 contacts Zn(2+). The 'HIGH' region motif lies at P29–N39. 3 residues coordinate Zn(2+): C207, H232, and E236. The short motif at K264 to S268 is the 'KMSKS' region element. K267 is a binding site for ATP.

This sequence belongs to the class-I aminoacyl-tRNA synthetase family. In terms of assembly, monomer. Zn(2+) is required as a cofactor.

Its subcellular location is the cytoplasm. The catalysed reaction is tRNA(Cys) + L-cysteine + ATP = L-cysteinyl-tRNA(Cys) + AMP + diphosphate. The polypeptide is Cysteine--tRNA ligase (Alkaliphilus oremlandii (strain OhILAs) (Clostridium oremlandii (strain OhILAs))).